A 469-amino-acid polypeptide reads, in one-letter code: Keratin, type I cytoskeletal 16 (469 aa).

The tract at residues 1 to 20 (MATCSRQFTSSSSMKGSCGI) is disordered. The tract at residues 1 to 112 (MATCSRQFTS…GIGDGLLVGS (112 aa)) is head. The segment at 113–148 (EKVTMQNLNDRLATYLDKVRALEEANRDLEVKIRDW) is coil 1A. Positions 113-424 (EKVTMQNLND…RLLDGENIHS (312 aa)) constitute an IF rod domain. Positions 149–166 (YQRQRPTEIKDYSPYFKT) are linker 1. Residues 167–258 (IEDLKSKIII…KNHEEEMLAL (92 aa)) are coil 1B. The interval 259-281 (RGQTGGDVNVEMDAAPGVDLSRI) is linker 12. The segment at 282-420 (LNEMRDQYEQ…ATYRRLLDGE (139 aa)) is coil 2. The segment at 421-469 (NIHSSSQHSSGQSYSSREVFSSSSRQPRSILKEQGSTSFSQSQSQSSRD) is tail. The segment at 422–469 (IHSSSQHSSGQSYSSREVFSSSSRQPRSILKEQGSTSFSQSQSQSSRD) is disordered. Low complexity-rich tracts occupy residues 423–444 (HSSSQHSSGQSYSSREVFSSSS) and 454–469 (QGSTSFSQSQSQSSRD).

This sequence belongs to the intermediate filament family. As to quaternary structure, heterodimer of a type I and a type II keratin. KRT16 associates with KRT6 isomers (KRT6A or KRT6B). Interacts with TCHP. Interacts with TRADD. In terms of tissue distribution, expressed in the epithelia of the tongue, upper and lower palate, footpad, proximal nail fold and nail bed, penile spine, sweat gland ducts, and back epidermis (at protein level). Expressed in upper suprabasal layers of the corneal epithelium (at protein level). Expressed in internal stratified epithelia in the esophagus and vagina (at protein level). Expressed in transitional stratified squamous epithelia in the forestomach, anal canal, and nasal cavity (at protein level). Expressed in transitional epithelia of the ureter, bladder and urethra (at protein level). In mature hair follicles, expressed in the companion layer of the outer root sheath during anagen and in the club hair sheath during catagen and telogen (at protein level).

Its function is as follows. Epidermis-specific type I keratin that plays a key role in skin. Acts as a regulator of innate immunity in response to skin barrier breach: required for some inflammatory checkpoint for the skin barrier maintenance. This Mus musculus (Mouse) protein is Keratin, type I cytoskeletal 16 (Krt16).